Here is a 1774-residue protein sequence, read N- to C-terminus: U3 small nucleolar RNA-associated protein 10 (1774 aa).

The interval 1206–1226 (YDKHSSAGSNDEEAGSESEAE) is disordered. The segment covering 1215–1226 (NDEEAGSESEAE) has biased composition (acidic residues). An HEAT repeat occupies 1734–1772 (LVPIIAELLEDEDEEVEYEVRSGLVKVVESVMGEPFDRY).

The protein belongs to the HEATR1/UTP10 family. As to quaternary structure, component of the ribosomal small subunit (SSU) processome.

Its subcellular location is the nucleus. The protein localises to the nucleolus. Functionally, involved in nucleolar processing of pre-18S ribosomal RNA. Involved in ribosome biosynthesis. This is U3 small nucleolar RNA-associated protein 10 from Kluyveromyces lactis (strain ATCC 8585 / CBS 2359 / DSM 70799 / NBRC 1267 / NRRL Y-1140 / WM37) (Yeast).